A 50-amino-acid chain; its full sequence is Toxic protein HokC (50 aa).

Residues 1-5 (MKQHK) are Cytoplasmic-facing. A helical; Signal-anchor for type II membrane protein membrane pass occupies residues 6–24 (AMIVALIVICITAVVAALV). Over 25–50 (TRKDLCEVHIRTGQTEVAVFTAYESE) the chain is Periplasmic.

Belongs to the Hok/Gef family. In terms of assembly, homodimer; disulfide-linked.

The protein localises to the cell inner membrane. In terms of biological role, toxic component of a type I toxin-antitoxin (TA) system. When overexpressed kills cells within minutes; causes collapse of the transmembrane potential and arrest of respiration. Its toxic effect is probably neutralized by antisense antitoxin RNA SokC. This is Toxic protein HokC from Escherichia coli (strain K12).